We begin with the raw amino-acid sequence, 555 residues long: Cinnamate beta-D-glucosyltransferase (555 aa).

The Proton acceptor role is filled by His19. His19 is a binding site for an anthocyanidin. UDP-alpha-D-glucose is bound by residues Gln344, His359, Trp362, Asn363, Ser364, and Glu367. Gly382 contacts an anthocyanidin. UDP-alpha-D-glucose-binding residues include Asp383 and Gln384.

Belongs to the UDP-glycosyltransferase family. As to expression, highest expression detected in fruit, with lower levels detected in flower and petiole. Barely detectable in leaf and root.

The catalysed reaction is (E)-cinnamate + UDP-alpha-D-glucose = 1-O-(trans-cinnamoyl)-beta-D-glucose + UDP. In terms of biological role, broad spectrum multifunctional glucosyltransferase. Catalyzes the formation of cinnamic acid and p-coumaric acid glucose esters during fruit ripening. Accepted substrates range from derivatives of cinnamic acid and benzoic acid to heterocyclic and aliphatic compounds, resulting in the formation of O- and S-glucose esters and O-glucosides. May also be involved in detoxification of xenobiotics. The protein is Cinnamate beta-D-glucosyltransferase of Fragaria ananassa (Strawberry).